The following is an 853-amino-acid chain: WEB family protein At5g16730, chloroplastic (853 aa).

Composition is skewed to low complexity over residues 1-27 (MASK…PATP) and 36-49 (KSET…STTT). The N-terminal 84 residues, 1 to 84 (MASKTKTSLS…PTPPEKSQAR (84 aa)), are a transit peptide targeting the chloroplast. Disordered stretches follow at residues 1–106 (MASK…IKED), 386–465 (KEDL…SKKA), 666–765 (LAKK…SVEV), and 778–820 (KEAF…ALTA). A compositionally biased stretch (polar residues) spans 92–101 (ESPQTTTRLS). Residues 94 to 670 (PQTTTRLSQI…LEEAILAKKQ (577 aa)) are a coiled coil. 3 stretches are compositionally biased toward basic and acidic residues: residues 402-465 (EVSK…SKKA), 698-718 (NGHR…HEPP), and 732-753 (MEEK…KKDE). Over residues 754–763 (SQDDDKDDSV) the composition is skewed to acidic residues. Residues 778 to 788 (KEAFPDKKSEL) show a composition bias toward basic and acidic residues. Serine 790 bears the Phosphoserine mark. The segment covering 797 to 807 (SSKIDESDKTS) has biased composition (basic and acidic residues).

This sequence belongs to the WEB family.

Its subcellular location is the plastid. It is found in the chloroplast. The chain is WEB family protein At5g16730, chloroplastic from Arabidopsis thaliana (Mouse-ear cress).